The sequence spans 336 residues: Alcohol dehydrogenase (336 aa).

Residues Cys37, His58, Cys89, Cys92, Cys95, Cys103, and Cys145 each contribute to the Zn(2+) site.

Belongs to the zinc-containing alcohol dehydrogenase family. Zn(2+) is required as a cofactor.

The catalysed reaction is a primary alcohol + NAD(+) = an aldehyde + NADH + H(+). It catalyses the reaction a secondary alcohol + NAD(+) = a ketone + NADH + H(+). The polypeptide is Alcohol dehydrogenase (adh) (Staphylococcus aureus (strain USA300)).